A 578-amino-acid polypeptide reads, in one-letter code: Vesicular acetylcholine transporter (578 aa).

Residues 1-32 (MASFQIPVINLEVREVKDIVWEKIQEPVNQRR) are Cytoplasmic-facing. A helical membrane pass occupies residues 33-53 (LILVIVSIALLLDNMLYMVIV). Topologically, residues 54–98 (PIIPDYLREIGSFDDGPTPPPLRDNITGKIIPVHHDHHGQDSATG) are lumenal, vesicle. The N-linked (GlcNAc...) asparagine glycan is linked to N78. The helical transmembrane segment at 99 to 119 (ILFASKAIVQLMVNPFSGGLI) threads the bilayer. Over 120–125 (DKIGYD) the chain is Cytoplasmic. A helical transmembrane segment spans residues 126–146 (LPMMIGLTIMFFSTAVFACGS). Topologically, residues 147–154 (SYSVLFFA) are lumenal, vesicle. Residues 155–175 (RSLQGAGSAFADTAGLAMIAD) traverse the membrane as a helical segment. Topologically, residues 176–187 (RFTEENERSQAL) are cytoplasmic. The chain crosses the membrane as a helical span at residues 188–208 (GIALAFISFGCLVAPPFGGAL). Topologically, residues 209–215 (YQFAGKE) are lumenal, vesicle. A helical membrane pass occupies residues 216–236 (VPFLILALVCLLDGLMLLLVM). Over 237–263 (KPVKEAMKQSKDVQDQVIPIWRLLMDP) the chain is Cytoplasmic. A helical transmembrane segment spans residues 264–284 (YIAVCAGALTMSNVALAFLEP). The Lumenal, vesicle portion of the chain corresponds to 285–299 (TISLWMEDNMTTDNW). N293 is a glycosylation site (N-linked (GlcNAc...) asparagine). The helical transmembrane segment at 300-320 (KIGMVWLPAFFPHVLGVVITV) threads the bilayer. Residues 321–330 (KMARKYPQHQ) are Cytoplasmic-facing. The helical transmembrane segment at 331–351 (WLMAAGGLALEGFSCFIIPFC) threads the bilayer. Residues 352 to 355 (SGYK) are Lumenal, vesicle-facing. A helical transmembrane segment spans residues 356–376 (MLMLPICVICFGIALIDTALL). Over 377–387 (PTLGYLVDVRY) the chain is Cytoplasmic. A helical transmembrane segment spans residues 388–408 (VSVYGSIYAIADISYSIAYAV). At 409–413 (GPIIA) the chain is on the lumenal, vesicle side. Residues 414 to 434 (GGVVEAIGFTALNFLIAFSNL) traverse the membrane as a helical segment. The Cytoplasmic portion of the chain corresponds to 435-578 (AYVPVLRKLR…APANPFRQGF (144 aa)). Low complexity-rich tracts occupy residues 507–534 (EYQQQQQGYQQGYQQDQGYQPGYQEQGG) and 549–563 (QQQQQQQQQQQQQVQ). The interval 507 to 578 (EYQQQQQGYQ…APANPFRQGF (72 aa)) is disordered.

It belongs to the major facilitator superfamily. Vesicular transporter family.

The protein resides in the membrane. Involved in acetylcholine transport into synaptic vesicles. In Drosophila melanogaster (Fruit fly), this protein is Vesicular acetylcholine transporter (VAChT).